Here is a 247-residue protein sequence, read N- to C-terminus: Segregation and condensation protein A (247 aa).

Belongs to the ScpA family. In terms of assembly, component of a cohesin-like complex composed of ScpA, ScpB and the Smc homodimer, in which ScpA and ScpB bind to the head domain of Smc. The presence of the three proteins is required for the association of the complex with DNA.

The protein resides in the cytoplasm. In terms of biological role, participates in chromosomal partition during cell division. May act via the formation of a condensin-like complex containing Smc and ScpB that pull DNA away from mid-cell into both cell halves. The polypeptide is Segregation and condensation protein A (Bacillus anthracis (strain A0248)).